The primary structure comprises 298 residues: Iron-regulated virulence regulatory protein IrgB (298 aa).

The region spanning 1 to 59 (MQDLSAVKAFHALCQHKSLTAAAKALEQPKSTLSRRLAQLEEDLGQSLLMRQGNRLTLT) is the HTH lysR-type domain. The segment at residues 19 to 38 (LTAAAKALEQPKSTLSRRLA) is a DNA-binding region (H-T-H motif).

It belongs to the LysR transcriptional regulatory family.

In terms of biological role, transcription activation of the irgA gene. In the presence of sufficient iron, transcription of both irgA and irgB is negatively regulated by a fur-like protein. In low iron conditions, negative regulation of transcription is removed, and production of IrgB leads to positive transcriptional activation of irgA. The polypeptide is Iron-regulated virulence regulatory protein IrgB (irgB) (Vibrio cholerae serotype O1 (strain ATCC 39541 / Classical Ogawa 395 / O395)).